Here is a 155-residue protein sequence, read N- to C-terminus: Ribosome maturation factor RimP (155 aa).

The protein belongs to the RimP family.

The protein resides in the cytoplasm. Functionally, required for maturation of 30S ribosomal subunits. This is Ribosome maturation factor RimP from Gemmatimonas aurantiaca (strain DSM 14586 / JCM 11422 / NBRC 100505 / T-27).